A 297-amino-acid chain; its full sequence is Protease HtpX homolog (297 aa).

Transmembrane regions (helical) follow at residues 14 to 34 (VILL…AGYL) and 39 to 59 (YQLG…SMIF). His143 provides a ligand contact to Zn(2+). The active site involves Glu144. His147 contributes to the Zn(2+) binding site. 2 consecutive transmembrane segments (helical) span residues 158–178 (IAVA…RMMW) and 193–213 (GFGA…PLAA). Glu225 is a Zn(2+) binding site.

The protein belongs to the peptidase M48B family. Requires Zn(2+) as cofactor.

It is found in the cell membrane. The chain is Protease HtpX homolog from Streptococcus equi subsp. zooepidemicus (strain MGCS10565).